We begin with the raw amino-acid sequence, 367 residues long: Chorismate synthase (367 aa).

NADP(+) contacts are provided by Arg-48 and Arg-54. Residues Arg-125 to Ser-127, Asn-238 to Ala-239, Gly-278, Lys-293 to Ser-297, and Arg-319 each bind FMN.

It belongs to the chorismate synthase family. Homotetramer. FMNH2 serves as cofactor.

It catalyses the reaction 5-O-(1-carboxyvinyl)-3-phosphoshikimate = chorismate + phosphate. It functions in the pathway metabolic intermediate biosynthesis; chorismate biosynthesis; chorismate from D-erythrose 4-phosphate and phosphoenolpyruvate: step 7/7. Its function is as follows. Catalyzes the anti-1,4-elimination of the C-3 phosphate and the C-6 proR hydrogen from 5-enolpyruvylshikimate-3-phosphate (EPSP) to yield chorismate, which is the branch point compound that serves as the starting substrate for the three terminal pathways of aromatic amino acid biosynthesis. This reaction introduces a second double bond into the aromatic ring system. This Stenotrophomonas maltophilia (strain K279a) protein is Chorismate synthase.